Here is a 378-residue protein sequence, read N- to C-terminus: Glutamate 5-kinase (378 aa).

ATP is bound at residue lysine 19. Substrate is bound by residues serine 59, aspartate 146, and asparagine 158. 178-179 serves as a coordination point for ATP; it reads TD. Residues 285–363 enclose the PUA domain; the sequence is RGSVAVDAGA…SEFERLLGYT (79 aa).

It belongs to the glutamate 5-kinase family.

Its subcellular location is the cytoplasm. It catalyses the reaction L-glutamate + ATP = L-glutamyl 5-phosphate + ADP. The protein operates within amino-acid biosynthesis; L-proline biosynthesis; L-glutamate 5-semialdehyde from L-glutamate: step 1/2. Functionally, catalyzes the transfer of a phosphate group to glutamate to form L-glutamate 5-phosphate. This is Glutamate 5-kinase from Polaromonas sp. (strain JS666 / ATCC BAA-500).